The sequence spans 750 residues: Putative tyrosine-protein kinase EpsB (750 aa).

The Cytoplasmic portion of the chain corresponds to 1-31; it reads MTQNLPQPPAVNAPENELDLVRYLDVLVANR. The helical transmembrane segment at 32–52 threads the bilayer; sequence WLIAGIAAAVMLLGAAYAFLA. The Periplasmic portion of the chain corresponds to 53–444; the sequence is RPVYEADIMV…VPEEPVKPKK (392 aa). A helical transmembrane segment spans residues 445–465; the sequence is LTVTPLAGVLGVVLGVMAAFV. Residues 466–750 are Cytoplasmic-facing; it reads RNALFGGITD…NSKPPEAESA (285 aa).

The protein belongs to the etk/wzc family.

Its subcellular location is the cell inner membrane. It carries out the reaction L-tyrosyl-[protein] + ATP = O-phospho-L-tyrosyl-[protein] + ADP + H(+). In terms of biological role, probably involved in polymerization and/or export of exopolysaccharide EPS I which functions as a virulence factor. May be involved in an ATP-dependent process in the pathway for EPS I production, possibly export of the trimeric repeat units across the inner membrane or their polymerization. This chain is Putative tyrosine-protein kinase EpsB (epsB), found in Ralstonia solanacearum (Pseudomonas solanacearum).